Here is a 305-residue protein sequence, read N- to C-terminus: Nod factor export ATP-binding protein I (305 aa).

Residues 8-237 (IDLVGVRKSF…HIGCNVIEIY (230 aa)) form the ABC transporter domain. 40 to 47 (GPNGAGKS) is a binding site for ATP.

This sequence belongs to the ABC transporter superfamily. Lipooligosaccharide exporter (TC 3.A.1.102) family. The complex is composed of two ATP-binding proteins (NodI) and two transmembrane proteins (NodJ).

Its subcellular location is the cell inner membrane. Part of the ABC transporter complex NodIJ involved in the export of the nodulation factors (Nod factors), the bacterial signal molecules that induce symbiosis and subsequent nodulation induction. Nod factors are LCO (lipo-chitin oligosaccharide), a modified beta-1,4-linked N-acetylglucosamine oligosaccharide. This subunit is responsible for energy coupling to the transport system. This Bradyrhizobium sp. (strain SNU001) protein is Nod factor export ATP-binding protein I.